A 207-amino-acid chain; its full sequence is MTLDKLIEKLAAKSSILITPIIVKDYLAYQVEPNFLLPFLKALKESEELRFTVLTDLFGTDFPERDKRFEVIYNLLSLKLNKRLIIKVYISEKETIPSAMNIFNASCWYEREVYDMYGVNFDGNDDKRRILTDYEFEGHPLRKDFPLTGYTQVKYDEKLKKVAYEPVDLDIEYREFDFSSHWHSPSYVLPGDEKATDVIPAKAGIQK.

Belongs to the complex I 30 kDa subunit family. As to quaternary structure, NDH-1 is composed of 14 different subunits. Subunits NuoB, C, D, E, F, and G constitute the peripheral sector of the complex.

The protein resides in the cell inner membrane. The enzyme catalyses a quinone + NADH + 5 H(+)(in) = a quinol + NAD(+) + 4 H(+)(out). In terms of biological role, NDH-1 shuttles electrons from NADH, via FMN and iron-sulfur (Fe-S) centers, to quinones in the respiratory chain. The immediate electron acceptor for the enzyme in this species is believed to be ubiquinone. Couples the redox reaction to proton translocation (for every two electrons transferred, four hydrogen ions are translocated across the cytoplasmic membrane), and thus conserves the redox energy in a proton gradient. This Rickettsia felis (strain ATCC VR-1525 / URRWXCal2) (Rickettsia azadi) protein is NADH-quinone oxidoreductase subunit C.